The following is a 250-amino-acid chain: Adapter protein MecA (250 aa).

It belongs to the MecA family. Homodimer.

Enables the recognition and targeting of unfolded and aggregated proteins to the ClpC protease or to other proteins involved in proteolysis. The sequence is that of Adapter protein MecA from Streptococcus sanguinis (strain SK36).